A 239-amino-acid chain; its full sequence is Orotidine 5'-phosphate decarboxylase (239 aa).

Substrate is bound by residues Asp-12, Lys-34, 61 to 70 (DLKFHDIPNT), Thr-125, Arg-188, Gln-197, Gly-217, and Arg-218. Residue Lys-63 is the Proton donor of the active site.

Belongs to the OMP decarboxylase family. Type 1 subfamily. In terms of assembly, homodimer.

The enzyme catalyses orotidine 5'-phosphate + H(+) = UMP + CO2. Its pathway is pyrimidine metabolism; UMP biosynthesis via de novo pathway; UMP from orotate: step 2/2. Catalyzes the decarboxylation of orotidine 5'-monophosphate (OMP) to uridine 5'-monophosphate (UMP). In Syntrophomonas wolfei subsp. wolfei (strain DSM 2245B / Goettingen), this protein is Orotidine 5'-phosphate decarboxylase.